Here is a 601-residue protein sequence, read N- to C-terminus: Sulfite reductase [NADPH] flavoprotein alpha-component (601 aa).

In terms of domain architecture, Flavodoxin-like spans 64 to 202; that stretch reads ITLISASQTG…AAQEWRARVV (139 aa). FMN is bound by residues 70–75, 117–120, and 153–162; these read SQTGNA, STQG, and LGDTSYEFFC. The region spanning 236–450 is the FAD-binding FR-type domain; it reads EAPLSASLAV…IEHNDNFRLP (215 aa). Residues threonine 324, alanine 358, 388-391, 406-408, tyrosine 412, and 421-424 contribute to the FAD site; these read RLYS, TVG, and GGAS. NADP(+) is bound by residues 521-522, 527-531, and aspartate 563; these read SR and KIYVQ. Tyrosine 601 serves as a coordination point for FAD.

The protein belongs to the NADPH-dependent sulphite reductase flavoprotein subunit CysJ family. This sequence in the N-terminal section; belongs to the flavodoxin family. In the C-terminal section; belongs to the flavoprotein pyridine nucleotide cytochrome reductase family. In terms of assembly, alpha(8)-beta(8). The alpha component is a flavoprotein, the beta component is a hemoprotein. FAD serves as cofactor. FMN is required as a cofactor.

It catalyses the reaction hydrogen sulfide + 3 NADP(+) + 3 H2O = sulfite + 3 NADPH + 4 H(+). It functions in the pathway sulfur metabolism; hydrogen sulfide biosynthesis; hydrogen sulfide from sulfite (NADPH route): step 1/1. Functionally, component of the sulfite reductase complex that catalyzes the 6-electron reduction of sulfite to sulfide. This is one of several activities required for the biosynthesis of L-cysteine from sulfate. The flavoprotein component catalyzes the electron flow from NADPH -&gt; FAD -&gt; FMN to the hemoprotein component. This Citrobacter koseri (strain ATCC BAA-895 / CDC 4225-83 / SGSC4696) protein is Sulfite reductase [NADPH] flavoprotein alpha-component.